A 133-amino-acid polypeptide reads, in one-letter code: Succinate dehydrogenase assembly factor 3, mitochondrial (133 aa).

Residues 1–12 (MNNKLIYRSVRF) constitute a mitochondrion transit peptide.

Belongs to the complex I LYR family. SDHAF3 subfamily. In terms of assembly, interacts with SDH2 within an SDH1-SDH2 subcomplex.

It is found in the mitochondrion. The protein resides in the mitochondrion intermembrane space. It localises to the mitochondrion matrix. In terms of biological role, plays an essential role in the assembly of succinate dehydrogenase (SDH), an enzyme complex (also referred to as respiratory complex II) that is a component of both the tricarboxylic acid (TCA) cycle and the mitochondrial electron transport chain, and which couples the oxidation of succinate to fumarate with the reduction of ubiquinone (coenzyme Q) to ubiquinol. Promotes maturation of the iron-sulfur protein subunit SDH2 of the SDH catalytic dimer, protecting it from the deleterious effects of oxidants. Acts together with SDHAF1 (SDH6). In Saccharomyces cerevisiae (strain ATCC 204508 / S288c) (Baker's yeast), this protein is Succinate dehydrogenase assembly factor 3, mitochondrial.